The primary structure comprises 169 residues: Peptide deformylase (169 aa).

Fe cation contacts are provided by cysteine 92 and histidine 134. Glutamate 135 is a catalytic residue. Residue histidine 138 participates in Fe cation binding.

Belongs to the polypeptide deformylase family. Fe(2+) is required as a cofactor.

It carries out the reaction N-terminal N-formyl-L-methionyl-[peptide] + H2O = N-terminal L-methionyl-[peptide] + formate. Removes the formyl group from the N-terminal Met of newly synthesized proteins. Requires at least a dipeptide for an efficient rate of reaction. N-terminal L-methionine is a prerequisite for activity but the enzyme has broad specificity at other positions. This Cellvibrio japonicus (strain Ueda107) (Pseudomonas fluorescens subsp. cellulosa) protein is Peptide deformylase.